The chain runs to 413 residues: Histidine--tRNA ligase (413 aa).

The protein belongs to the class-II aminoacyl-tRNA synthetase family. Homodimer.

The protein localises to the cytoplasm. The catalysed reaction is tRNA(His) + L-histidine + ATP = L-histidyl-tRNA(His) + AMP + diphosphate + H(+). The protein is Histidine--tRNA ligase of Geobacter sulfurreducens (strain ATCC 51573 / DSM 12127 / PCA).